The sequence spans 457 residues: Reticulon-like protein B18 (457 aa).

Residues 94 to 183 (AAVTARRSKT…SPSSDQPQDV (90 aa)) are disordered. The span at 124–136 (LRSEAMVDTKENT) shows a compositional bias: basic and acidic residues. Positions 149–163 (NQRKQKKLGRSKKEK) are enriched in basic residues. Over residues 166–183 (SVPLLASPSPSSDQPQDV) the composition is skewed to low complexity. The region spanning 195-385 (ISDLIMWRDV…AFWNLTSLKT (191 aa)) is the Reticulon domain. The next 4 helical transmembrane spans lie at 208–228 (TLWF…AKGF), 230–250 (FSVF…SFLS), 314–334 (YGYL…SFTI), and 377–397 (FWNL…VVVI). Residues 407 to 457 (DSEDEEEKKQQEKTHPEQQKSPEDKSTSPRSAEEEQALVLVAETKAPKKLY) form a disordered region. A compositionally biased stretch (basic and acidic residues) spans 413-439 (EKKQQEKTHPEQQKSPEDKSTSPRSAE).

The protein localises to the endoplasmic reticulum membrane. The sequence is that of Reticulon-like protein B18 (RTNLB18) from Arabidopsis thaliana (Mouse-ear cress).